Consider the following 649-residue polypeptide: Serine/threonine-protein kinase par-4 (649 aa).

The span at 1-11 (MEGPSSSSVPT) shows a compositional bias: polar residues. A disordered region spans residues 1 to 132 (MEGPSSSSVP…DEEAETPEEQ (132 aa)). A compositionally biased stretch (basic and acidic residues) spans 45 to 55 (NTEKMEKEKKP). Composition is skewed to acidic residues over residues 64–77 (PDYD…GSCE) and 117–129 (DDME…AETP). The Protein kinase domain maps to 197 to 460 (YLWGGIIGTG…ISDVMQHPWF (264 aa)). Residues 203–211 (IGTGSYGKV) and K226 each bind ATP. Residue D324 is the Proton acceptor of the active site. The segment at 548–649 (TLEKRPGDGP…CIFRSRTDSS (102 aa)) is disordered. A compositionally biased stretch (low complexity) spans 597 to 609 (AVEVVEAVAAPEA).

This sequence belongs to the protein kinase superfamily. CAMK Ser/Thr protein kinase family. LKB1 subfamily. It depends on Mg(2+) as a cofactor. Mn(2+) is required as a cofactor.

It localises to the cytoplasm. The protein localises to the cell cortex. The catalysed reaction is L-seryl-[protein] + ATP = O-phospho-L-seryl-[protein] + ADP + H(+). The enzyme catalyses L-threonyl-[protein] + ATP = O-phospho-L-threonyl-[protein] + ADP + H(+). Its function is as follows. Required for cytoplasmic partitioning and asymmetric cell division in early embryogenesis. Phosphorylates and restricts the asymmetry effectors mex-5 and mex-6 to the anterior cytoplasm of the zygote and maintains these phosphorylations until fertilization. Phosphorylates and regulates aak-2 in response to oxidative stress. May also play a role in motility, behavioral response, regulation of lifespan and dauer formation through this pathway. This chain is Serine/threonine-protein kinase par-4, found in Caenorhabditis briggsae.